The chain runs to 139 residues: Large ribosomal subunit protein uL16 (139 aa).

A disordered region spans residues 1–23; it reads MLQPARTKYRKMHKGRMPGSAHR. The span at 7–16 shows a compositional bias: basic residues; it reads TKYRKMHKGR.

Belongs to the universal ribosomal protein uL16 family. As to quaternary structure, part of the 50S ribosomal subunit.

In terms of biological role, binds 23S rRNA and is also seen to make contacts with the A and possibly P site tRNAs. This chain is Large ribosomal subunit protein uL16, found in Myxococcus xanthus (strain DK1622).